The primary structure comprises 291 residues: AA14 family lytic polysaccharide monooxygenase (291 aa).

Positions 1-17 are cleaved as a signal peptide; sequence MLTTAILFTSLAGSAYA. The N-linked (GlcNAc...) asparagine glycan is linked to N141. Cystine bridges form between C192–C197, C199–C220, and C240–C247.

Belongs to the polysaccharide monooxygenase AA14 family. It depends on Cu(2+) as a cofactor.

Its subcellular location is the secreted. Lytic polysaccharide monooxygenase (LPMO) that is active against heteroxylan, xyloglucan and cellulose in beta-cellulose and released native oligosaccharides and corresponding C1- and/or C4-oxidized products. May act mainly on heteroxylan with numerous arabinosyl substituents between cellulose fibers rather than on recalcitrant xylan tightly associated with cellulose. Catalysis by LPMOs requires the reduction of the active-site copper from Cu(II) to Cu(I) by a reducing agent and H(2)O(2) or O(2) as a cosubstrate. Shows a branched chain preference, and has synergistic effects with the Penicillium parvum debranching enzyme ABF62C in an enzyme- and ascorbic acid-dependent manner. Also has synergistic effects with the Penicillium parvum GH10 endoxylanase XYN1, and the degree of synergy was greater with step-by-step addition than with simultaneous addition. The polypeptide is AA14 family lytic polysaccharide monooxygenase (Sordaria brevicollis).